An 81-amino-acid chain; its full sequence is Costars family protein ABRACL (81 aa).

Belongs to the costars family.

The chain is Costars family protein ABRACL from Coturnix coturnix (Common quail).